The chain runs to 190 residues: Scytalone dehydratase-like protein Arp1 (190 aa).

Residue Y67 coordinates substrate. Residues H102 and H127 contribute to the active site. A substrate-binding site is contributed by N148.

The protein belongs to the scytalone dehydratase family. As to quaternary structure, homotrimer. Each subunit contains an active site, located in the central part of the hydrophobic core of the monomer, which functions independently.

Scytalone dehydratase-like protein; part of the Pks2 gene cluster that mediates the formation of infectious structures (appressoria), enabling these fungi to kill insects faster. The product of the Pks2 gene cluster is different from the one of Pks1 and has still not been identified. The protein is Scytalone dehydratase-like protein Arp1 of Metarhizium anisopliae (strain ARSEF 549).